A 124-amino-acid chain; its full sequence is Large ribosomal subunit protein bL17 (124 aa).

The protein belongs to the bacterial ribosomal protein bL17 family. As to quaternary structure, part of the 50S ribosomal subunit. Contacts protein L32.

The polypeptide is Large ribosomal subunit protein bL17 (Acidithiobacillus ferrooxidans (strain ATCC 23270 / DSM 14882 / CIP 104768 / NCIMB 8455) (Ferrobacillus ferrooxidans (strain ATCC 23270))).